The sequence spans 271 residues: Thermoregulatory protein LcrF (271 aa).

An HTH araC/xylS-type domain is found at 167-265 (ERLQKFMEEN…GCTPSQARLT (99 aa)). 2 consecutive DNA-binding regions (H-T-H motif) follow at residues 184 to 205 (SKFA…GTVY) and 232 to 255 (IVDI…RRRF).

In terms of biological role, transcriptional activator of the thermally regulated virulent yopE gene. LcrF activity could be modulated by the interaction with an inducer molecule serving as a temperature messenger. The availability of the messenger would in turn be controlled by a temperature-responsive process serving as a cellular thermometer. In Yersinia pestis, this protein is Thermoregulatory protein LcrF (lcrF).